Reading from the N-terminus, the 359-residue chain is 3-dehydroquinate synthase (359 aa).

NAD(+) contacts are provided by residues 72-77 (DGEQYK), 106-110 (GVIGD), 130-131 (TT), K143, K152, and 170-173 (CLKT). E185, H248, and H265 together coordinate Zn(2+).

The protein belongs to the sugar phosphate cyclases superfamily. Dehydroquinate synthase family. Requires Co(2+) as cofactor. Zn(2+) serves as cofactor. NAD(+) is required as a cofactor.

The protein resides in the cytoplasm. The catalysed reaction is 7-phospho-2-dehydro-3-deoxy-D-arabino-heptonate = 3-dehydroquinate + phosphate. It functions in the pathway metabolic intermediate biosynthesis; chorismate biosynthesis; chorismate from D-erythrose 4-phosphate and phosphoenolpyruvate: step 2/7. In terms of biological role, catalyzes the conversion of 3-deoxy-D-arabino-heptulosonate 7-phosphate (DAHP) to dehydroquinate (DHQ). This is 3-dehydroquinate synthase from Photobacterium profundum (strain SS9).